The following is a 2208-amino-acid chain: Glutamate synthase 1 [NADH], chloroplastic (2208 aa).

The transit peptide at 1–49 (MSAASSSSVLHLRTNQQLLSLRSLKNSTSVASQLAVTSGVSRRRSCTAR) directs the protein to the chloroplast. The Nucleophile role is filled by Cys-117. One can recognise a Glutamine amidotransferase type-2 domain in the interval 117-521 (CGVGFVAELS…PGMMLLVDFE (405 aa)). The disordered stretch occupies residues 1040-1067 (GKSNTGEGGELPSRMEPLADGSRNPKRS). FMN is bound at residue 1211-1268 (LAETHQTLVANDLRGRTVLQTDGQLKTGRDVAVAALLGAEEFGFSTAPLITLGCIMMR). Cys-1264, Cys-1270, and Cys-1275 together coordinate [3Fe-4S] cluster. 1995–2009 (GGGDTGTDCIGTSIR) is an NAD(+) binding site.

This sequence belongs to the glutamate synthase family. Monomer. [3Fe-4S] cluster serves as cofactor. Requires FAD as cofactor. FMN is required as a cofactor. As to expression, highly expressed in roots and at low levels in leaves.

The protein localises to the plastid. It localises to the chloroplast. It catalyses the reaction 2 L-glutamate + NAD(+) = L-glutamine + 2-oxoglutarate + NADH + H(+). Its pathway is amino-acid biosynthesis; L-glutamate biosynthesis via GLT pathway; L-glutamate from 2-oxoglutarate and L-glutamine (NAD(+) route): step 1/1. The protein operates within energy metabolism; nitrogen metabolism. Its function is as follows. Involved in glutamate biosynthesis. Required for non-photorespiratory ammonium assimilation. Probably involved in primary ammonium assimilation in roots. The chain is Glutamate synthase 1 [NADH], chloroplastic (GLT1) from Arabidopsis thaliana (Mouse-ear cress).